The sequence spans 223 residues: Protein Mis18-alpha (223 aa).

The interval 1 to 30 (MAGTFSLEPCSTSSSCNHQGKRSESSLLEK) is disordered. Positions 9–18 (PCSTSSSCNH) are enriched in polar residues. A compositionally biased stretch (basic and acidic residues) spans 21–30 (KRSESSLLEK). Ser33, Ser36, and Ser37 each carry phosphoserine. Residues 71–169 (PLVFLCTRCR…SVEAVESYTL (99 aa)) enclose the Mis18 domain. The Zn(2+) site is built by Cys76, Cys79, Cys132, and Cys135. A Glycyl lysine isopeptide (Lys-Gly) (interchain with G-Cter in SUMO2) cross-link involves residue Lys153. Ser223 carries the phosphoserine modification.

The protein belongs to the mis18 family. Homodimer, and heterodimer with OIP5/MIS18B. Identified in a complex containing MIS18A, OIP5/MIS18B, MIS18BP1, RBBP7 and RBBP4.

It is found in the nucleus. Its subcellular location is the chromosome. The protein resides in the centromere. Functionally, required for recruitment of CENPA to centromeres and normal chromosome segregation during mitosis. The sequence is that of Protein Mis18-alpha (Mis18a) from Rattus norvegicus (Rat).